We begin with the raw amino-acid sequence, 554 residues long: 3-(3-hydroxy-phenyl)propionate/3-hydroxycinnamic acid hydroxylase (554 aa).

Residues 17–46 (QVAIAGAGPVGLMMANYLGQMGIDVLVVEK) and 285–295 (FRIDRVLLAGD) each bind FAD.

It belongs to the PheA/TfdB FAD monooxygenase family. The cofactor is FAD.

The enzyme catalyses 3-(3-hydroxyphenyl)propanoate + NADH + O2 + H(+) = 3-(2,3-dihydroxyphenyl)propanoate + NAD(+) + H2O. The catalysed reaction is (2E)-3-(3-hydroxyphenyl)prop-2-enoate + NADH + O2 + H(+) = (2E)-3-(2,3-dihydroxyphenyl)prop-2-enoate + NAD(+) + H2O. The protein operates within aromatic compound metabolism; 3-phenylpropanoate degradation. Functionally, catalyzes the insertion of one atom of molecular oxygen into position 2 of the phenyl ring of 3-(3-hydroxyphenyl)propionate (3-HPP) and hydroxycinnamic acid (3HCI). This chain is 3-(3-hydroxy-phenyl)propionate/3-hydroxycinnamic acid hydroxylase, found in Escherichia coli O17:K52:H18 (strain UMN026 / ExPEC).